A 187-amino-acid polypeptide reads, in one-letter code: Adenine phosphoribosyltransferase (187 aa).

It belongs to the purine/pyrimidine phosphoribosyltransferase family. As to quaternary structure, homodimer.

Its subcellular location is the cytoplasm. The enzyme catalyses AMP + diphosphate = 5-phospho-alpha-D-ribose 1-diphosphate + adenine. It functions in the pathway purine metabolism; AMP biosynthesis via salvage pathway; AMP from adenine: step 1/1. Catalyzes a salvage reaction resulting in the formation of AMP, that is energically less costly than de novo synthesis. The sequence is that of Adenine phosphoribosyltransferase from Burkholderia pseudomallei (strain 668).